A 601-amino-acid polypeptide reads, in one-letter code: Glutathione-regulated potassium-efflux system protein KefB (601 aa).

The next 13 helical transmembrane spans lie at 4 to 24 (ADLL…VPLA), 29 to 49 (IGAV…GLGF), 55 to 75 (EILH…GLEL), 87 to 107 (IFGV…GLLM), 111 to 131 (FLWQ…TAMA), 152 to 172 (VLLF…LLAG), 177 to 197 (HFDW…LIGG), 207 to 227 (FIAA…LVLS), 230 to 250 (LFMD…GVLL), 262 to 282 (AIDP…GMSL), 284 to 304 (LGVL…LVVI), 324 to 344 (MQFA…FSTA), and 356 to 376 (ALLL…MKGI). The RCK N-terminal domain maps to 400 to 519 (KPQVVVVGFG…AGVTQFSRET (120 aa)).

This sequence belongs to the monovalent cation:proton antiporter 2 (CPA2) transporter (TC 2.A.37) family. KefB subfamily. Interacts with the regulatory subunit KefG.

The protein resides in the cell inner membrane. Pore-forming subunit of a potassium efflux system that confers protection against electrophiles. Catalyzes K(+)/H(+) antiport. The chain is Glutathione-regulated potassium-efflux system protein KefB from Salmonella typhi.